Reading from the N-terminus, the 261-residue chain is Triosephosphate isomerase (261 aa).

10 to 12 serves as a coordination point for substrate; it reads NWK. H100 acts as the Electrophile in catalysis. Residue E172 is the Proton acceptor of the active site. Substrate-binding positions include G178, S218, and 239–240; that span reads GG.

It belongs to the triosephosphate isomerase family. In terms of assembly, homodimer.

The protein resides in the cytoplasm. The catalysed reaction is D-glyceraldehyde 3-phosphate = dihydroxyacetone phosphate. Its pathway is carbohydrate biosynthesis; gluconeogenesis. It participates in carbohydrate degradation; glycolysis; D-glyceraldehyde 3-phosphate from glycerone phosphate: step 1/1. Functionally, involved in the gluconeogenesis. Catalyzes stereospecifically the conversion of dihydroxyacetone phosphate (DHAP) to D-glyceraldehyde-3-phosphate (G3P). This chain is Triosephosphate isomerase, found in Mycobacterium leprae (strain TN).